Consider the following 478-residue polypeptide: Solute carrier family 2, facilitated glucose transporter member 8 (478 aa).

The interval 1-20 (MTPEDQEETQPLLRPPGGSA) is disordered. Over 1-25 (MTPEDQEETQPLLRPPGGSAPRGRR) the chain is Cytoplasmic. The segment covering 11 to 20 (PLLRPPGGSA) has biased composition (low complexity). A Dileucine internalization motif motif is present at residues 12–13 (LL). The chain crosses the membrane as a helical span at residues 26–46 (VFLAAFAAALGPLSFGFALGY). Residues 47 to 70 (SSPAIPSLRRAAPPAPHLDEDAAS) lie on the Extracellular side of the membrane. Residues 71-91 (WFGAIVTLGAAAGGVLGGWLL) traverse the membrane as a helical segment. Residues 92–97 (DRAGRK) lie on the Cytoplasmic side of the membrane. The chain crosses the membrane as a helical span at residues 98–118 (LSLVLCALPFVAGFAVITAAQ). Over 119–127 (NLWMLLGGR) the chain is Extracellular. A helical transmembrane segment spans residues 128–148 (LLTGLACGIASLVAPVYISEI). Residues 149 to 158 (AYPEVRGLLG) lie on the Cytoplasmic side of the membrane. Residues 159-179 (SCVQLMVVTGILLAYLAGWVL) traverse the membrane as a helical segment. Gln-162 lines the D-glucose pocket. Residues 180-182 (EWR) lie on the Extracellular side of the membrane. Residues 183 to 203 (WLAVLGCVPPSFMLLLMCFMP) form a helical membrane-spanning segment. Over 204-257 (ETPRFLLSQHKHQEAMAAMQFLWGYAQGWEEPPLGAQHQDFHVAQLRRPGVYKP) the chain is Cytoplasmic. The helical transmembrane segment at 258–278 (FIIGISLMAFQQLSGVNAVMF) threads the bilayer. D-glucose is bound by residues 268–269 (QQ) and Asn-274. Over 279–293 (YAETIFEEAKFKDSS) the chain is Extracellular. Residues 294–314 (LASVVVGVIQVLFTATAALIM) form a helical membrane-spanning segment. The Cytoplasmic segment spans residues 315–320 (DRAGRR). Residues 321–341 (LLLTLSGVVMVFSTSAFGTYF) form a helical membrane-spanning segment. The Extracellular segment spans residues 342 to 368 (KLTEGGPSNSSHVDLPALVSMEAADTN). Asn-350 is a glycosylation site (N-linked (GlcNAc...) asparagine). The chain crosses the membrane as a helical span at residues 369–389 (VGLAWLAVGSMCLFIAGFAVG). Over 390–405 (WGPIPWLLMSEIFPLH) the chain is Cytoplasmic. Trp-395 provides a ligand contact to D-glucose. Residues 406-426 (VKGVATGVCVLTNWFMAFLVT) traverse the membrane as a helical segment. Over 427 to 439 (KEFSSLMEVLRPY) the chain is Extracellular. A helical membrane pass occupies residues 440–460 (GAFWLASAFCIFGVLFTLACV). The Cytoplasmic portion of the chain corresponds to 461–478 (PETKGKTLEQITAHFEGR).

It belongs to the major facilitator superfamily. Sugar transporter (TC 2.A.1.1) family. Glucose transporter subfamily. In terms of assembly, interacts with AP2B1. In terms of tissue distribution, abundantly expressed in testis and more moderately in lung, kidney, spleen, intestine, skeletal muscle, liver and mammary gland.

It localises to the cell membrane. It is found in the cytoplasmic vesicle membrane. It carries out the reaction D-glucose(out) = D-glucose(in). The catalysed reaction is D-fructose(out) = D-fructose(in). The enzyme catalyses L-dehydroascorbate(out) = L-dehydroascorbate(in). It catalyses the reaction alpha,alpha-trehalose(in) = alpha,alpha-trehalose(out). Inhibited by cytochalasin B. In terms of biological role, insulin-regulated facilitative hexose transporter that mediates the transport of glucose and fructose. Facilitates hepatic influx of dietary trehalose, which in turn inhibits glucose and fructose influx triggering a starvation signal and hepatic autophagy through activation of AMPK and ULK1. Also able to mediate the transport of dehydroascorbate. In Bos taurus (Bovine), this protein is Solute carrier family 2, facilitated glucose transporter member 8.